The primary structure comprises 632 residues: PTS system mannitol-specific EIICBA component (632 aa).

In terms of domain architecture, PTS EIIC type-2 spans 12–341 (FGRFLSNMIM…ILLKYDFNTI (330 aa)). The next 6 helical transmembrane spans lie at 24–45 (ISIF…WQPN), 50–70 (QLIS…TGGS), 134–155 (SLAI…PFIE), 165–185 (IQII…EPAK), 273–292 (LILG…GGLI), and 313–334 (FSNI…SILL). The PTS EIIB type-2 domain occupies 374–469 (KTIIVACDAG…KLVENMVFLY (96 aa)). Catalysis depends on C380, which acts as the Phosphocysteine intermediate; for EIIB activity. C380 carries the post-translational modification Phosphocysteine; by EIIA. In terms of domain architecture, PTS EIIA type-2 spans 488 to 630 (FQLNEENIIL…KEALSLLTME (143 aa)). Residue H548 is the Tele-phosphohistidine intermediate; for EIIA activity of the active site. Phosphohistidine; by HPr is present on H548.

As to quaternary structure, homodimer. In terms of processing, an intramolecular phosphotransfer takes places between His-548 and Cys-380.

It localises to the cell inner membrane. It carries out the reaction D-mannitol(out) + N(pros)-phospho-L-histidyl-[protein] = D-mannitol 1-phosphate(in) + L-histidyl-[protein]. Its function is as follows. The phosphoenolpyruvate-dependent sugar phosphotransferase system (sugar PTS), a major carbohydrate active transport system, catalyzes the phosphorylation of incoming sugar substrates concomitantly with their translocation across the cell membrane. This system is involved in D-mannitol transport. This Buchnera aphidicola subsp. Acyrthosiphon pisum (strain APS) (Acyrthosiphon pisum symbiotic bacterium) protein is PTS system mannitol-specific EIICBA component (mtlA).